A 649-amino-acid chain; its full sequence is Vitamin K-dependent protein S (649 aa).

Positions 1-14 (SKQQASQVLVRKRR) are excised as a propeptide. Residues 15 to 60 (ANSMLEETKQGNLERECIEELCNKEEAREVFENDPETDYFYPKYLV) enclose the Gla domain. 4-carboxyglutamate occurs at positions 20, 21, 28, 30, 33, 34, 39, 40, 43, 46, and 50. C31 and C36 form a disulfide bridge. The tract at residues 61–89 (CLRSFQSGLFTAARQSTDAYPDLRSCVNA) is thrombin-sensitive. The EGF-like 1 domain maps to 90-128 (IPDQCSPLPCNEDGYMSCKDGKASFTCTCKPGWQGERCE). Intrachain disulfides connect C94–C107, C99–C116, C118–C127, C134–C148, C144–C157, C159–C172, C178–C190, C185–C199, C201–C214, C220–C229, C225–C238, C240–C255, and C422–C448. D109 carries the post-translational modification (3R)-3-hydroxyaspartate. The region spanning 130 to 173 (DINECKDPSNINGGCSQICDNTPGSYHCSCKSGFVMLSNKKDCK) is the EGF-like 2; calcium-binding domain. One can recognise an EGF-like 3; calcium-binding domain in the interval 174–215 (DVDECSLKPNMCGTAVCKNIPGDFECECPEGYRYNLKSKSCE). Residues 216 to 256 (DVDECSENMCAQLCVNYPGGYTCYCDGKKGFKLAQDQKSCE) form the EGF-like 4; calcium-binding domain. Laminin G-like domains lie at 272–448 (LLYL…NKHC) and 457–639 (YYPG…AHSC). Residues N472, N482, and N503 are each glycosylated (N-linked (GlcNAc...) asparagine). Cysteines 612 and 639 form a disulfide.

In terms of processing, the iron and 2-oxoglutarate dependent 3-hydroxylation of aspartate and asparagine is (R) stereospecific within EGF domains. As to expression, plasma.

The protein resides in the secreted. Anticoagulant plasma protein; it is a cofactor to activated protein C in the degradation of coagulation factors Va and VIIIa. It helps to prevent coagulation and stimulating fibrinolysis. This chain is Vitamin K-dependent protein S (PROS1), found in Macaca mulatta (Rhesus macaque).